The primary structure comprises 1944 residues: Anaphase-promoting complex subunit 1 (1944 aa).

Phosphoserine occurs at positions 51 and 60. Phosphothreonine is present on Thr-291. Residues 312 to 343 (ESPVASPFQNYSSIHSQSRSTSSPSLHSRSPS) are disordered. 7 positions are modified to phosphoserine: Ser-313, Ser-341, Ser-343, Ser-355, Ser-362, Ser-373, and Ser-377. The span at 323 to 343 (SSIHSQSRSTSSPSLHSRSPS) shows a compositional bias: low complexity. Positions 370–395 (NLSSHSQSPKRHSISHSPSGSFNDSF) are disordered. Residues 384-393 (SHSPSGSFND) show a composition bias toward polar residues. Phosphothreonine is present on Thr-537. Phosphoserine occurs at positions 547 and 555. Tyr-571 carries the phosphotyrosine modification. Phosphoserine is present on residues Ser-680, Ser-686, and Ser-688. The segment at 991–1014 (NLPRGKSVLSSEVSSGTEAEEEDD) is disordered. Residues 998–1007 (VLSSEVSSGT) show a composition bias toward polar residues. PC repeat units follow at residues 1297 to 1325 (AAGL…PEQL), 1366 to 1404 (GATL…PEFL), 1467 to 1501 (GACL…YLSA), and 1520 to 1552 (LLSL…EMNY).

It belongs to the APC1 family. The mammalian APC/C is composed at least of 14 distinct subunits ANAPC1, ANAPC2, CDC27/APC3, ANAPC4, ANAPC5, CDC16/APC6, ANAPC7, CDC23/APC8, ANAPC10, ANAPC11, CDC26/APC12, ANAPC13, ANAPC15 and ANAPC16 that assemble into a complex of at least 19 chains with a combined molecular mass of around 1.2 MDa; APC/C interacts with FZR1 and FBXO5. Phosphorylated. Phosphorylation on Ser-355 occurs specifically during mitosis. As to expression, abundantly expressed in proliferating fibroblasts, juvenile testis, adult brain and epididymis.

It participates in protein modification; protein ubiquitination. Functionally, component of the anaphase promoting complex/cyclosome (APC/C), a cell cycle-regulated E3 ubiquitin ligase that controls progression through mitosis and the G1 phase of the cell cycle. The APC/C complex acts by mediating ubiquitination and subsequent degradation of target proteins: it mainly mediates the formation of 'Lys-11'-linked polyubiquitin chains and, to a lower extent, the formation of 'Lys-48'- and 'Lys-63'-linked polyubiquitin chains. The APC/C complex catalyzes assembly of branched 'Lys-11'-/'Lys-48'-linked branched ubiquitin chains on target proteins. This chain is Anaphase-promoting complex subunit 1 (Anapc1), found in Mus musculus (Mouse).